The following is a 358-amino-acid chain: Tribbles homolog 3 (358 aa).

The segment at 1–54 (MRATPLAAPAGSLSRKKRLELDDNLDTERPVQKRARSGPQPRLPPCLLPLSPPT) is disordered. The interaction with DDIT3/CHOP stretch occupies residues 1–127 (MRATPLAAPA…KHVARPTEVL (127 aa)). Residue serine 12 is modified to Phosphoserine. Pro residues predominate over residues 41-54 (PRLPPCLLPLSPPT). The Protein kinase domain maps to 68–316 (LGPYVLLEPE…TGILLHPWLR (249 aa)).

Belongs to the protein kinase superfamily. CAMK Ser/Thr protein kinase family. Tribbles subfamily. As to quaternary structure, interacts with AKT1, AKT2, MAP2K1 and MAP2K7. Interacts with ATF4. Interacts with DDIT3/CHOP and inhibits its interaction with EP300/P300. Interacts with APOBEC3C. Interacts (via N-terminus) with APOBEC3A. Interacts with RELA. Highest expression in liver, pancreas, peripheral blood leukocytes and bone marrow. Also highly expressed in a number of primary lung, colon and breast tumors. Expressed in spleen, thymus, and prostate and is undetectable in other examined tissues, including testis, ovary, small intestine, colon, leukocyte, heart, brain, placenta, lung, skeletal muscle, and kidney.

Its subcellular location is the nucleus. Inactive protein kinase which acts as a regulator of the integrated stress response (ISR), a process for adaptation to various stress. Inhibits the transcriptional activity of DDIT3/CHOP and is involved in DDIT3/CHOP-dependent cell death during ER stress. May play a role in programmed neuronal cell death but does not appear to affect non-neuronal cells. Acts as a negative feedback regulator of the ATF4-dependent transcription during the ISR: while TRIB3 expression is promoted by ATF4, TRIB3 protein interacts with ATF4 and inhibits ATF4 transcription activity. Disrupts insulin signaling by binding directly to Akt kinases and blocking their activation. May bind directly to and mask the 'Thr-308' phosphorylation site in AKT1. Interacts with the NF-kappa-B transactivator p65 RELA and inhibits its phosphorylation and thus its transcriptional activation activity. Interacts with MAPK kinases and regulates activation of MAP kinases. Can inhibit APOBEC3A editing of nuclear DNA. The chain is Tribbles homolog 3 (TRIB3) from Homo sapiens (Human).